A 543-amino-acid polypeptide reads, in one-letter code: MILREWRRFYTIGSVLLRHGLDELIPRHWQPWPVRLFRRSLFWLRNRYPEQSRGARLRHAFEGLGPVFIKFGQMLSTRRDLLPPDLAEELAMLQDRVPSFDGQLAREQIEQALGQPIEALFADFDQQPLASASVAQVHTARLKENNAEIVIKVIRPDIKPVINDDIRLMRLCAKIVAFLIPNNRLRPVEVIEEYRRTLLDELNLMSEAANAIQLRRNFENSSHLYVPLVYSDYCRESVLVMERIYGIPVSDRAALEANGTDLKLLAERGVEVFFTQVFRDSFFHADMHPGNVFVSYEHPHDPQWIGIDCGIVGTLNRQDKRYLAENFLAFFNRDYRKVAELHVQSGWVPPDTKVEEFESALRTVLEPIFAKPLAEISFGQVLLNLFNTARRFNMHVQPQLVLLQKTLLYIEGLGRHLYPQLDLWQTAKPFLEHWMRQQIGPKAAWRAIKEKAPFWAEKLPDMPDLIYDTLTQVQHQQHMVKGLYQQYHQQHRRHAQARFLLGAGATLLLGSILLLPTHEQLASAGLTISIICWLNGWWKISRR.

The region spanning 123 to 500 is the Protein kinase domain; it reads DFDQQPLASA…HRRHAQARFL (378 aa). Residues 129-137 and Lys-152 contribute to the ATP site; that span reads LASASVAQV. Asp-286 serves as the catalytic Proton acceptor. 2 helical membrane-spanning segments follow: residues 499–519 and 521–541; these read FLLGAGATLLLGSILLLPTHE and LASAGLTISIICWLNGWWKIS.

The protein belongs to the ABC1 family. UbiB subfamily.

Its subcellular location is the cell inner membrane. It functions in the pathway cofactor biosynthesis; ubiquinone biosynthesis [regulation]. Is probably a protein kinase regulator of UbiI activity which is involved in aerobic coenzyme Q (ubiquinone) biosynthesis. The sequence is that of Probable protein kinase UbiB from Tolumonas auensis (strain DSM 9187 / NBRC 110442 / TA 4).